Consider the following 660-residue polypeptide: UvrABC system protein B (660 aa).

In terms of domain architecture, Helicase ATP-binding spans 26–413 (AGINEGKKHQ…TPEMVEQIIR (388 aa)). An ATP-binding site is contributed by 39–46 (GATGTGKT). The Beta-hairpin motif lies at 92-115 (YYDYYQPEAYVPQSDTYIEKDASI). Residues 430–592 (QIDDLIGEIN…ITPKTIEKRI (163 aa)) form the Helicase C-terminal domain. Residues 624 to 659 (EAVIERMEAEMKEAAKTLNFERAAELRDLILELKAE) form the UVR domain.

The protein belongs to the UvrB family. As to quaternary structure, forms a heterotetramer with UvrA during the search for lesions. Interacts with UvrC in an incision complex.

The protein resides in the cytoplasm. Its function is as follows. The UvrABC repair system catalyzes the recognition and processing of DNA lesions. A damage recognition complex composed of 2 UvrA and 2 UvrB subunits scans DNA for abnormalities. Upon binding of the UvrA(2)B(2) complex to a putative damaged site, the DNA wraps around one UvrB monomer. DNA wrap is dependent on ATP binding by UvrB and probably causes local melting of the DNA helix, facilitating insertion of UvrB beta-hairpin between the DNA strands. Then UvrB probes one DNA strand for the presence of a lesion. If a lesion is found the UvrA subunits dissociate and the UvrB-DNA preincision complex is formed. This complex is subsequently bound by UvrC and the second UvrB is released. If no lesion is found, the DNA wraps around the other UvrB subunit that will check the other stand for damage. This Halalkalibacterium halodurans (strain ATCC BAA-125 / DSM 18197 / FERM 7344 / JCM 9153 / C-125) (Bacillus halodurans) protein is UvrABC system protein B.